We begin with the raw amino-acid sequence, 710 residues long: uncharacterized protein (710 aa).

Residues M1–E40 form a disordered region. Residues P15–P25 are compositionally biased toward low complexity. In terms of domain architecture, FHA spans V108–L165. 3 coiled-coil regions span residues T206–E240, E409–G440, and A471–K502. The disordered stretch occupies residues I230 to E250. Disordered regions lie at residues E535–S560, K591–S619, and E671–Y710. Over residues Q538–S560 the composition is skewed to polar residues. The stretch at Q613–R661 forms a coiled coil.

This is an uncharacterized protein from Caenorhabditis elegans.